Here is a 99-residue protein sequence, read N- to C-terminus: Putative membrane protein insertion efficiency factor (99 aa).

It belongs to the UPF0161 family.

Its subcellular location is the cell membrane. Its function is as follows. Could be involved in insertion of integral membrane proteins into the membrane. The sequence is that of Putative membrane protein insertion efficiency factor from Corynebacterium efficiens (strain DSM 44549 / YS-314 / AJ 12310 / JCM 11189 / NBRC 100395).